A 184-amino-acid polypeptide reads, in one-letter code: Elongation factor P (184 aa).

The protein belongs to the elongation factor P family.

Its subcellular location is the cytoplasm. It functions in the pathway protein biosynthesis; polypeptide chain elongation. Involved in peptide bond synthesis. Stimulates efficient translation and peptide-bond synthesis on native or reconstituted 70S ribosomes in vitro. Probably functions indirectly by altering the affinity of the ribosome for aminoacyl-tRNA, thus increasing their reactivity as acceptors for peptidyl transferase. The polypeptide is Elongation factor P (Polaromonas naphthalenivorans (strain CJ2)).